Here is a 183-residue protein sequence, read N- to C-terminus: MEDDSLYLGGEWQFNHFSKLTSSRPDAAFAEIQRTSLPEKSPLSCETRVDLCDDLAPVARQLAPREKLPLSSRRPAAVGAGLQNMGNTCYVNASLQCLTYTPPLANYMLSREHSQTCHRHKGCMLCTMQAHITRALHNPGHVIQPSQALAAGFHRGKQEDAHEFLMFTVDAMEKACLPGHKQV.

Positions 80–183 (AGLQNMGNTC…KACLPGHKQV (104 aa)) constitute a USP domain.

The protein belongs to the peptidase C19 family. USP17 subfamily.

The protein resides in the nucleus. It is found in the endoplasmic reticulum. This chain is Ubiquitin carboxyl-terminal hydrolase 17-like protein 23 (USP17L23), found in Homo sapiens (Human).